The sequence spans 140 residues: Large ribosomal subunit protein uL11 (140 aa).

It belongs to the universal ribosomal protein uL11 family. As to quaternary structure, part of the ribosomal stalk of the 50S ribosomal subunit. Interacts with L10 and the large rRNA to form the base of the stalk. L10 forms an elongated spine to which L12 dimers bind in a sequential fashion forming a multimeric L10(L12)X complex. One or more lysine residues are methylated.

Forms part of the ribosomal stalk which helps the ribosome interact with GTP-bound translation factors. This chain is Large ribosomal subunit protein uL11, found in Dehalococcoides mccartyi (strain ATCC BAA-2266 / KCTC 15142 / 195) (Dehalococcoides ethenogenes (strain 195)).